The chain runs to 311 residues: CAAX prenyl protease 2 (311 aa).

3 helical membrane passes run 14 to 34, 51 to 71, and 94 to 114; these read VATCVAMALFYVLILYVPTVI, FICAAICTVASLVFTAFILPI, and VVYPLLLTSLVYAGSLVLKLF. The Proton donor/acceptor role is filled by E164. Residues 173 to 193 form a helical membrane-spanning segment; it reads IPLLLCAGFRINTAIFLCPVL. The Proton donor/acceptor role is filled by H198. The next 3 helical transmembrane spans lie at 219–239, 244–264, and 268–288; these read IVGLQLGYTVIFGAYASFLFI, LAAPLFAHIFCNYMGLPVLYA, and GLVSAAFLGGVVGFVLLLFPL.

The protein belongs to the peptidase U48 family. In terms of tissue distribution, expressed in seeds, stems, leaves, flowers and siliques.

Its subcellular location is the endoplasmic reticulum membrane. The catalysed reaction is Hydrolyzes the peptide bond -P2-(S-farnesyl or geranylgeranyl)C-P1'-P2'-P3'-COOH where P1' and P2' are amino acids with aliphatic sidechains and P3' is any C-terminal residue.. Its activity is regulated as follows. Inhibited in vitro by L-1-tosylamido-2-phenylethyl chloromethyl ketone (TPCK) and N-ethylmaleimide, but not by EDTA. Functionally, protease involved in the processing of a variety of prenylated proteins containing the C-terminal CAAX motif, where C is a cysteine modified with an isoprenoid lipid, A is an aliphatic amino acid and X is any C-terminal amino acid. Proteolytically removes the C-terminal three residues of farnesylated and geranylated proteins, leaving the prenylated cysteine as the new C-terminus. The substrate specificity is only partially overlapping with that of FACE1. CAAX processing is likely required for subcellular targeting of prenylated proteins to the plasma membrane. The polypeptide is CAAX prenyl protease 2 (FACE2) (Arabidopsis thaliana (Mouse-ear cress)).